The primary structure comprises 259 residues: Ribonuclease HII (259 aa).

Residues 1–26 (MLSTPPKLPSAHGPVHFPRRSGTGMN) form a disordered region. In terms of domain architecture, RNase H type-2 spans 55–243 (APVAGADEAG…VRAQQLVLFE (189 aa)). A divalent metal cation-binding residues include D61, E62, and D152.

This sequence belongs to the RNase HII family. The cofactor is Mn(2+). Mg(2+) is required as a cofactor.

Its subcellular location is the cytoplasm. It carries out the reaction Endonucleolytic cleavage to 5'-phosphomonoester.. Functionally, endonuclease that specifically degrades the RNA of RNA-DNA hybrids. This Azorhizobium caulinodans (strain ATCC 43989 / DSM 5975 / JCM 20966 / LMG 6465 / NBRC 14845 / NCIMB 13405 / ORS 571) protein is Ribonuclease HII.